The following is a 467-amino-acid chain: Uronate isomerase (467 aa).

Belongs to the metallo-dependent hydrolases superfamily. Uronate isomerase family.

It catalyses the reaction D-glucuronate = D-fructuronate. It carries out the reaction aldehydo-D-galacturonate = keto-D-tagaturonate. Its pathway is carbohydrate metabolism; pentose and glucuronate interconversion. In Solibacter usitatus (strain Ellin6076), this protein is Uronate isomerase.